A 685-amino-acid polypeptide reads, in one-letter code: Mitotic interactor and substrate of PLK1 (685 aa).

A Phosphoserine; by CDK1 modification is found at serine 78. Disordered regions lie at residues 155–181 (SGTV…STPL) and 207–253 (NKEV…QGKG). At threonine 172 the chain carries Phosphothreonine; by CDK1. Threonine 179 carries the phosphothreonine modification. Serine 214 is modified (phosphoserine; by CDK1). The residue at position 219 (threonine 219) is a Phosphothreonine. Serine 284 bears the Phosphoserine; by CDK1 mark. A Phosphothreonine; by CDK1 modification is found at threonine 287. Residues 345 to 499 (GRPSLYVQRD…PWKLPRGSPQ (155 aa)) are disordered. Serine 348 is subject to Phosphoserine. Residues 355-371 (MVQETQREEDHRREGLH) show a composition bias toward basic and acidic residues. Threonine 377 carries the phosphothreonine; by CDK1 modification. The residue at position 382 (serine 382) is a Phosphoserine. Residues 392 to 417 (ALSSDSILSPDSILSPAPDARAADPA) are compositionally biased toward low complexity. 3 positions are modified to phosphoserine; by PLK1: serine 394, serine 395, and serine 397. A phosphoserine mark is found at serine 406 and serine 436. A compositionally biased stretch (polar residues) spans 454 to 469 (SGLSTVDTEAATSPKA). At serine 477 the chain carries Phosphoserine; by PLK1. Residues 478–488 (ESSGKPMSTKQ) show a composition bias toward polar residues. 2 positions are modified to phosphoserine: serine 547 and serine 549. Residues 551–575 (DLLERERESVLRREREVAEERRNAL) are a coiled coil. Disordered stretches follow at residues 575-607 (LFPE…SYSV) and 629-651 (PVDS…NPSD). The residue at position 581 (serine 581) is a Phosphoserine; by PLK1. Residue threonine 583 is modified to Phosphothreonine. Residues 589-607 (DQNSRSSSQASGITGSYSV) are compositionally biased toward polar residues. Serine 592 bears the Phosphoserine; by PLK1 mark. Residue serine 681 is modified to Phosphoserine.

It belongs to the MISP family. Associates with F-actin. Interacts with DCTN1; this interaction regulates DCTN1 distribution at the cell cortex. Interacts with PTK2/FAK and MAPRE1. Post-translationally, phosphorylated by CDK1 and PLK1. CDK1 is the priming kinase for PLK1 phosphorylation. Phosphorylation by PLK1 is required for proper spindle orientation at metaphase.

It localises to the cell junction. It is found in the focal adhesion. The protein resides in the cytoplasm. Its subcellular location is the cytoskeleton. The protein localises to the cell cortex. Functionally, plays a role in mitotic spindle orientation and mitotic progression. Regulates the distribution of dynactin at the cell cortex in a PLK1-dependent manner, thus stabilizing cortical and astral microtubule attachments required for proper mitotic spindle positioning. May link microtubules to the actin cytospkeleton and focal adhesions. May be required for directed cell migration and centrosome orientation. May also be necessary for proper stacking of the Golgi apparatus. The protein is Mitotic interactor and substrate of PLK1 of Pongo abelii (Sumatran orangutan).